A 432-amino-acid polypeptide reads, in one-letter code: MRRYAVMSSVSLQDFDAERIGLFHEDIKRKFDELKSKNLKLDLTRGKPSSEQLDFADELLALPGKGDFKAADGTDVRNYGGLDGIVDIRQIWADLLGVPVEQVLAGDASSLNIMFDVISWSYIFGNNDSVQPWSKEETVKWICPVPGYDRHFSITERFGFEMISVPMNEDGPDMDAVEELVKNPQVKGMWVVPVFSNPTGFTVTEDVAKRLSAMETAAPDFRVVWDNAYAVHTLTDEFPEVIDIVGLGEAAGNPNRFWAFTSTSKITLAGAGVSFFLTSAENRKWYTGHAGIRGIGPNKVNQLAHARYFGDAEGVRAVMRKHAASLAPKFNKVLEILDSRLAEYGVAQWTVPAGGYFISLDVVPGTASRVAELAKEAGIALTGAGSSYPLRQDPENKNLRLAPSLPPVEELEVAMDGVATCVLLAAAEHYAN.

45–46 (RG) is a substrate binding site. 109-111 (SSL) is a pyridoxal 5'-phosphate binding site. 148–150 (YDR) lines the substrate pocket. Pyridoxal 5'-phosphate contacts are provided by residues N197, Y229, and 262 to 265 (STSK). R400 contributes to the substrate binding site.

Belongs to the class-I pyridoxal-phosphate-dependent aminotransferase family. As to quaternary structure, homodimer. Pyridoxal 5'-phosphate serves as cofactor.

The catalysed reaction is L-aspartate + 2-oxoglutarate = oxaloacetate + L-glutamate. This Corynebacterium glutamicum (strain ATCC 13032 / DSM 20300 / JCM 1318 / BCRC 11384 / CCUG 27702 / LMG 3730 / NBRC 12168 / NCIMB 10025 / NRRL B-2784 / 534) protein is Aspartate aminotransferase.